The primary structure comprises 372 residues: UDP-N-acetylglucosamine--N-acetylmuramyl-(pentapeptide) pyrophosphoryl-undecaprenol N-acetylglucosamine transferase (372 aa).

UDP-N-acetyl-alpha-D-glucosamine contacts are provided by residues 10 to 12 (TGG), Asn-124, Arg-166, Ser-196, Ile-256, and Gln-301.

The protein belongs to the glycosyltransferase 28 family. MurG subfamily.

The protein localises to the cell membrane. It carries out the reaction di-trans,octa-cis-undecaprenyl diphospho-N-acetyl-alpha-D-muramoyl-L-alanyl-D-glutamyl-meso-2,6-diaminopimeloyl-D-alanyl-D-alanine + UDP-N-acetyl-alpha-D-glucosamine = di-trans,octa-cis-undecaprenyl diphospho-[N-acetyl-alpha-D-glucosaminyl-(1-&gt;4)]-N-acetyl-alpha-D-muramoyl-L-alanyl-D-glutamyl-meso-2,6-diaminopimeloyl-D-alanyl-D-alanine + UDP + H(+). It participates in cell wall biogenesis; peptidoglycan biosynthesis. In terms of biological role, cell wall formation. Catalyzes the transfer of a GlcNAc subunit on undecaprenyl-pyrophosphoryl-MurNAc-pentapeptide (lipid intermediate I) to form undecaprenyl-pyrophosphoryl-MurNAc-(pentapeptide)GlcNAc (lipid intermediate II). The sequence is that of UDP-N-acetylglucosamine--N-acetylmuramyl-(pentapeptide) pyrophosphoryl-undecaprenol N-acetylglucosamine transferase from Desulforamulus reducens (strain ATCC BAA-1160 / DSM 100696 / MI-1) (Desulfotomaculum reducens).